We begin with the raw amino-acid sequence, 233 residues long: Enolase-phosphatase E1 (233 aa).

Mg(2+)-binding residues include D6 and E8. Residues 128 to 129 (SS) and K163 contribute to the substrate site. A Mg(2+)-binding site is contributed by D188.

It belongs to the HAD-like hydrolase superfamily. MasA/MtnC family. Monomer. Mg(2+) is required as a cofactor.

It localises to the cytoplasm. Its subcellular location is the nucleus. It carries out the reaction 5-methylsulfanyl-2,3-dioxopentyl phosphate + H2O = 1,2-dihydroxy-5-(methylsulfanyl)pent-1-en-3-one + phosphate. It participates in amino-acid biosynthesis; L-methionine biosynthesis via salvage pathway; L-methionine from S-methyl-5-thio-alpha-D-ribose 1-phosphate: step 3/6. The protein operates within amino-acid biosynthesis; L-methionine biosynthesis via salvage pathway; L-methionine from S-methyl-5-thio-alpha-D-ribose 1-phosphate: step 4/6. Its function is as follows. Bifunctional enzyme that catalyzes the enolization of 2,3-diketo-5-methylthiopentyl-1-phosphate (DK-MTP-1-P) into the intermediate 2-hydroxy-3-keto-5-methylthiopentenyl-1-phosphate (HK-MTPenyl-1-P), which is then dephosphorylated to form the acireductone 1,2-dihydroxy-3-keto-5-methylthiopentene (DHK-MTPene). In Yarrowia lipolytica (strain CLIB 122 / E 150) (Yeast), this protein is Enolase-phosphatase E1.